The sequence spans 369 residues: Transcription initiation factor IIA large subunit (369 aa).

Polar residues-rich tracts occupy residues 113–210 (HGNS…QNSP) and 218–233 (TESS…NDVP). The interval 113–248 (HGNSNYYSPP…IHDLDDAGSP (136 aa)) is disordered. Serine 249 carries the post-translational modification Phosphoserine. Residues 282-319 (IEDNEDEKKPPVDTPSDEAINSDLDDPDSDEAPETEEG) are disordered. The span at 304 to 319 (DLDDPDSDEAPETEEG) shows a compositional bias: acidic residues.

It belongs to the TFIIA subunit 1 family. TFIIA is a heterodimer of the large subunit and the small subunit gamma.

It is found in the nucleus. In terms of biological role, TFIIA is a component of the transcription machinery of RNA polymerase II and plays an important role in transcriptional activation. TFIIA in a complex with tbp mediates transcriptional activity. In Schizosaccharomyces pombe (strain 972 / ATCC 24843) (Fission yeast), this protein is Transcription initiation factor IIA large subunit.